The primary structure comprises 251 residues: Flap endonuclease Xni (251 aa).

Positions 51–72 (EDDRSDSWRHQSLPDYKAGRSP) are disordered. A Mg(2+)-binding site is contributed by Asp-104. The 5'-3' exonuclease domain occupies 160 to 249 (VLPHQLPDYW…LSGNLQQLRL (90 aa)). 5 residues coordinate K(+): Leu-171, Ala-172, Pro-180, Val-182, and Ile-185. An interaction with DNA region spans residues 184-189 (GIGAKT).

This sequence belongs to the Xni family. Mg(2+) is required as a cofactor. It depends on K(+) as a cofactor.

Has flap endonuclease activity. During DNA replication, flap endonucleases cleave the 5'-overhanging flap structure that is generated by displacement synthesis when DNA polymerase encounters the 5'-end of a downstream Okazaki fragment. This Yersinia enterocolitica serotype O:8 / biotype 1B (strain NCTC 13174 / 8081) protein is Flap endonuclease Xni.